The chain runs to 563 residues: Minor fimbrium subunit Mfa1 (563 aa).

The first 19 residues, 1 to 19 (MKLNKMFLVGALLSLGFAS), serve as a signal peptide directing secretion. Cys20 carries the N-palmitoyl cysteine lipid modification. A lipid anchor (S-diacylglycerol cysteine) is attached at Cys20. A propeptide spanning residues 20 to 49 (CSKEGNGPDPDNAAKSYMSMTLSMPMGSAR) is cleaved from the precursor. The tract at residues 504–543 (LVPDPDPSNPENPNNPDPNPDEPGTPVPTDPENPLPDQDT) is disordered. A compositionally biased stretch (pro residues) spans 505 to 537 (VPDPDPSNPENPNNPDPNPDEPGTPVPTDPENP).

Belongs to the bacteroidetes fimbrillin superfamily. As to quaternary structure, structural component of the fimbrial stalk. Minor fimbriae are composed of a structural subunit, most often Mfa1, and the accessory subunits Mfa3, Mfa4 and Mfa5. Mfa1 interacts with Mfa2; this anchors the fimbrium in the membrane. Fimbrium assembly occurs by linear, head-to-tail oligomerization of fimbrial subunits. This is mediated via insertion of a C-terminal beta-strand from one subunit into a groove in the N-terminal domain of the following subunit. Interacts with S.gordonii ssp5.

The protein resides in the fimbrium. Its subcellular location is the cell outer membrane. Functionally, structural subunit of the minor fimbriae. These filamentous pili are attached to the cell surface; they mediate biofilm formation, adhesion onto host cells and onto other bacteria that are part of the oral microbiome. They play an important role in invasion of periodontal tissues and are recognized as major virulence factors. Mfa1 orthologs from different strains have highly divergent sequences, and this correlates with pathogenicity. This chain is Minor fimbrium subunit Mfa1, found in Porphyromonas gingivalis (strain ATCC 33277 / DSM 20709 / CIP 103683 / JCM 12257 / NCTC 11834 / 2561).